The primary structure comprises 245 residues: 1-(5-phosphoribosyl)-5-[(5-phosphoribosylamino)methylideneamino] imidazole-4-carboxamide isomerase (245 aa).

The active-site Proton acceptor is D7. The active-site Proton donor is the D129.

It belongs to the HisA/HisF family.

It localises to the cytoplasm. The catalysed reaction is 1-(5-phospho-beta-D-ribosyl)-5-[(5-phospho-beta-D-ribosylamino)methylideneamino]imidazole-4-carboxamide = 5-[(5-phospho-1-deoxy-D-ribulos-1-ylimino)methylamino]-1-(5-phospho-beta-D-ribosyl)imidazole-4-carboxamide. It participates in amino-acid biosynthesis; L-histidine biosynthesis; L-histidine from 5-phospho-alpha-D-ribose 1-diphosphate: step 4/9. In Escherichia coli (strain ATCC 8739 / DSM 1576 / NBRC 3972 / NCIMB 8545 / WDCM 00012 / Crooks), this protein is 1-(5-phosphoribosyl)-5-[(5-phosphoribosylamino)methylideneamino] imidazole-4-carboxamide isomerase.